The primary structure comprises 429 residues: Adenylosuccinate synthetase (429 aa).

GTP contacts are provided by residues 12–18 (GDEGKGK) and 40–42 (GHT). Asp13 serves as the catalytic Proton acceptor. Asp13 and Gly40 together coordinate Mg(2+). IMP-binding positions include 13–16 (DEGK), 38–41 (NAGH), Thr128, Arg142, Gln223, Thr238, and Arg302. Catalysis depends on His41, which acts as the Proton donor. 298–304 (VNTGRPR) provides a ligand contact to substrate. GTP-binding positions include Arg304, 330–332 (KLD), and 412–414 (GVG).

This sequence belongs to the adenylosuccinate synthetase family. As to quaternary structure, homodimer. Mg(2+) serves as cofactor.

Its subcellular location is the cytoplasm. It carries out the reaction IMP + L-aspartate + GTP = N(6)-(1,2-dicarboxyethyl)-AMP + GDP + phosphate + 2 H(+). The protein operates within purine metabolism; AMP biosynthesis via de novo pathway; AMP from IMP: step 1/2. Plays an important role in the de novo pathway of purine nucleotide biosynthesis. Catalyzes the first committed step in the biosynthesis of AMP from IMP. This is Adenylosuccinate synthetase from Renibacterium salmoninarum (strain ATCC 33209 / DSM 20767 / JCM 11484 / NBRC 15589 / NCIMB 2235).